We begin with the raw amino-acid sequence, 289 residues long: Elongation factor Ts (289 aa).

Residues 82 to 85 (TDFL) are involved in Mg(2+) ion dislocation from EF-Tu.

It belongs to the EF-Ts family.

It is found in the cytoplasm. Its function is as follows. Associates with the EF-Tu.GDP complex and induces the exchange of GDP to GTP. It remains bound to the aminoacyl-tRNA.EF-Tu.GTP complex up to the GTP hydrolysis stage on the ribosome. The chain is Elongation factor Ts from Pseudomonas aeruginosa (strain LESB58).